We begin with the raw amino-acid sequence, 564 residues long: Carbamoyl phosphate synthase large chain, N-terminal section (564 aa).

The tract at residues 1–399 (MPETPNKVLI…ALQKAIRSLE (399 aa)) is carboxyphosphate synthetic domain. 12 residues coordinate ATP: Arg-127, Arg-167, Gly-173, Gly-174, Glu-206, Val-208, Glu-213, Gly-239, Val-240, His-241, Gln-282, and Glu-296. The region spanning 131–325 (RAFMKKIGEP…IARIAAKIAI (195 aa)) is the ATP-grasp domain. Mg(2+) is bound by residues Gln-282, Glu-296, and Asn-298. 3 residues coordinate Mn(2+): Gln-282, Glu-296, and Asn-298. Positions 400 to 560 (IGEPGLGPSP…YSTYEEECEA (161 aa)) are oligomerization domain.

This sequence belongs to the CarB family. As to quaternary structure, composed of two chains; the small (or glutamine) chain promotes the hydrolysis of glutamine to ammonia, which is used by the large (or ammonia) chain to synthesize carbamoyl phosphate. Tetramer of heterodimers (alpha,beta)4. Requires Mg(2+) as cofactor. It depends on Mn(2+) as a cofactor.

It carries out the reaction hydrogencarbonate + L-glutamine + 2 ATP + H2O = carbamoyl phosphate + L-glutamate + 2 ADP + phosphate + 2 H(+). The enzyme catalyses hydrogencarbonate + NH4(+) + 2 ATP = carbamoyl phosphate + 2 ADP + phosphate + 2 H(+). The protein operates within amino-acid biosynthesis; L-arginine biosynthesis; carbamoyl phosphate from bicarbonate: step 1/1. It participates in pyrimidine metabolism; UMP biosynthesis via de novo pathway; (S)-dihydroorotate from bicarbonate: step 1/3. In terms of biological role, large subunit of the glutamine-dependent carbamoyl phosphate synthetase (CPSase). CPSase catalyzes the formation of carbamoyl phosphate from the ammonia moiety of glutamine, carbonate, and phosphate donated by ATP, constituting the first step of 2 biosynthetic pathways, one leading to arginine and/or urea and the other to pyrimidine nucleotides. The large subunit (synthetase) binds the substrates ammonia (free or transferred from glutamine from the small subunit), hydrogencarbonate and ATP and carries out an ATP-coupled ligase reaction, activating hydrogencarbonate by forming carboxy phosphate which reacts with ammonia to form carbamoyl phosphate. This Methanopyrus kandleri (strain AV19 / DSM 6324 / JCM 9639 / NBRC 100938) protein is Carbamoyl phosphate synthase large chain, N-terminal section (carB1).